The chain runs to 129 residues: Phosphoribosyl-AMP cyclohydrolase (129 aa).

Aspartate 77 contributes to the Mg(2+) binding site. Cysteine 78 is a Zn(2+) binding site. The Mg(2+) site is built by aspartate 79 and aspartate 81. 2 residues coordinate Zn(2+): cysteine 94 and cysteine 101.

The protein belongs to the PRA-CH family. In terms of assembly, homodimer. Mg(2+) is required as a cofactor. It depends on Zn(2+) as a cofactor.

The protein resides in the cytoplasm. It carries out the reaction 1-(5-phospho-beta-D-ribosyl)-5'-AMP + H2O = 1-(5-phospho-beta-D-ribosyl)-5-[(5-phospho-beta-D-ribosylamino)methylideneamino]imidazole-4-carboxamide. The protein operates within amino-acid biosynthesis; L-histidine biosynthesis; L-histidine from 5-phospho-alpha-D-ribose 1-diphosphate: step 3/9. Its function is as follows. Catalyzes the hydrolysis of the adenine ring of phosphoribosyl-AMP. The sequence is that of Phosphoribosyl-AMP cyclohydrolase from Methanosphaera stadtmanae (strain ATCC 43021 / DSM 3091 / JCM 11832 / MCB-3).